The following is a 160-amino-acid chain: Putative antiporter subunit mnhE2 (160 aa).

A run of 3 helical transmembrane segments spans residues 22–42 (HFKF…IYIL), 55–75 (IWVA…SSIS), and 100–120 (SDWA…STVI).

It belongs to the CPA3 antiporters (TC 2.A.63) subunit E family. In terms of assembly, may form a heterooligomeric complex that consists of seven subunits: mnhA2, mnhB2, mnhC2, mnhD2, mnhE2, mnhF2 and mnhG2.

The protein resides in the cell membrane. The protein is Putative antiporter subunit mnhE2 (mnhE2) of Staphylococcus aureus (strain Mu3 / ATCC 700698).